The chain runs to 179 residues: Large ribosomal subunit protein uL5 (179 aa).

This sequence belongs to the universal ribosomal protein uL5 family. Part of the 50S ribosomal subunit; part of the 5S rRNA/L5/L18/L25 subcomplex. Contacts the 5S rRNA and the P site tRNA. Forms a bridge to the 30S subunit in the 70S ribosome.

In terms of biological role, this is one of the proteins that bind and probably mediate the attachment of the 5S RNA into the large ribosomal subunit, where it forms part of the central protuberance. In the 70S ribosome it contacts protein S13 of the 30S subunit (bridge B1b), connecting the 2 subunits; this bridge is implicated in subunit movement. Contacts the P site tRNA; the 5S rRNA and some of its associated proteins might help stabilize positioning of ribosome-bound tRNAs. This is Large ribosomal subunit protein uL5 from Dechloromonas aromatica (strain RCB).